A 145-amino-acid chain; its full sequence is Protein SprT-like (145 aa).

The region spanning 5–141 is the SprT-like domain; it reads DYVREVSLAD…CGRCHGRLIK (137 aa). Residue histidine 64 coordinates Zn(2+). Glutamate 65 is an active-site residue. Histidine 68 is a Zn(2+) binding site.

It belongs to the SprT family. Zn(2+) serves as cofactor.

The protein localises to the cytoplasm. The sequence is that of Protein SprT-like from Streptococcus equi subsp. zooepidemicus (strain H70).